The chain runs to 345 residues: Selenide, water dikinase (345 aa).

The active site involves C16. Residues K19 and T46–D48 each bind ATP. Mg(2+) is bound at residue D49. ATP-binding positions include D66, D89, and G136–T138. A Mg(2+)-binding site is contributed by D89. Position 224 (D224) interacts with Mg(2+).

Belongs to the selenophosphate synthase 1 family. Class I subfamily. As to quaternary structure, homodimer. Mg(2+) is required as a cofactor.

It carries out the reaction hydrogenselenide + ATP + H2O = selenophosphate + AMP + phosphate + 2 H(+). In terms of biological role, synthesizes selenophosphate from selenide and ATP. In Clostridium botulinum (strain Eklund 17B / Type B), this protein is Selenide, water dikinase.